The sequence spans 688 residues: Protein SDA1 homolog (688 aa).

A phosphoserine mark is found at S232, S234, and S236. A coiled-coil region spans residues 254–318 (KKSSKNKKKL…ERFEVKMMLM (65 aa)). Over residues 484 to 498 (VENEEENAEGDEDGW) the composition is skewed to acidic residues. Residues 484–524 (VENEEENAEGDEDGWESASLSDEADSDGEWVDVHHSSDEEQ) form a disordered region. Positions 514-524 (VDVHHSSDEEQ) are enriched in basic and acidic residues. 2 positions are modified to phosphoserine: S586 and S596. Residues 605–688 (KKPKSDKETR…ALLKKRKRMK (84 aa)) are disordered. Residues 668–681 (SFREKQLALRDALL) are compositionally biased toward basic and acidic residues.

This sequence belongs to the SDA1 family.

The protein localises to the nucleus. The protein resides in the nucleolus. Required for 60S pre-ribosomal subunits export to the cytoplasm. The polypeptide is Protein SDA1 homolog (SDAD1) (Bos taurus (Bovine)).